The primary structure comprises 159 residues: Ribonuclease P protein component 2 (159 aa).

Belongs to the eukaryotic/archaeal RNase P protein component 2 family. As to quaternary structure, consists of a catalytic RNA component and at least 4-5 protein subunits.

It localises to the cytoplasm. The catalysed reaction is Endonucleolytic cleavage of RNA, removing 5'-extranucleotides from tRNA precursor.. Functionally, part of ribonuclease P, a protein complex that generates mature tRNA molecules by cleaving their 5'-ends. This chain is Ribonuclease P protein component 2, found in Halorubrum lacusprofundi (strain ATCC 49239 / DSM 5036 / JCM 8891 / ACAM 34).